We begin with the raw amino-acid sequence, 463 residues long: Cytochrome c-552 (463 aa).

Residues 1-23 form the signal peptide; that stretch reads MNVKSIALSAVIATSFLAAGAMA. H83 is a heme c binding site. The heme site is built by C111, C114, and K115. Heme c is bound by residues C149, C152, H153, C191, C194, and H195. Residues E197, Y198, K246, and Q248 each contribute to the Ca(2+) site. Y198 lines the substrate pocket. H249 contributes to the substrate binding site. Heme c contacts are provided by H260, C267, C270, H271, H286, C299, C302, H303, and H378.

Belongs to the cytochrome c-552 family. It depends on Ca(2+) as a cofactor. Requires heme c as cofactor.

The protein resides in the periplasm. The catalysed reaction is 6 Fe(III)-[cytochrome c] + NH4(+) + 2 H2O = 6 Fe(II)-[cytochrome c] + nitrite + 8 H(+). Its pathway is nitrogen metabolism; nitrate reduction (assimilation). Its function is as follows. Catalyzes the reduction of nitrite to ammonia, consuming six electrons in the process. This Shewanella frigidimarina (strain NCIMB 400) protein is Cytochrome c-552.